The chain runs to 218 residues: Adenylate kinase (218 aa).

10–15 (GAGKGT) serves as a coordination point for ATP. The interval 30–59 (STGDMLRAAVKAGTPLGIEAKKVMDSGGLV) is NMP. Residues threonine 31, arginine 36, 57–59 (GLV), 85–88 (GFPR), and glutamine 92 each bind AMP. The tract at residues 122–159 (GRRSHSASGRTYHVKYNPPKVEGLDDVTGEPLIQREDD) is LID. ATP-binding positions include arginine 123 and 132–133 (TY). Residues arginine 156 and arginine 167 each contribute to the AMP site. Glycine 203 is a binding site for ATP.

The protein belongs to the adenylate kinase family. As to quaternary structure, monomer.

Its subcellular location is the cytoplasm. The enzyme catalyses AMP + ATP = 2 ADP. It participates in purine metabolism; AMP biosynthesis via salvage pathway; AMP from ADP: step 1/1. Its function is as follows. Catalyzes the reversible transfer of the terminal phosphate group between ATP and AMP. Plays an important role in cellular energy homeostasis and in adenine nucleotide metabolism. This Polaromonas naphthalenivorans (strain CJ2) protein is Adenylate kinase.